Reading from the N-terminus, the 245-residue chain is Large ribosomal subunit protein eL29 (245 aa).

Residues 1 to 26 show a composition bias toward basic residues; that stretch reads MAKSKNHTTHNQSRKWHRNGIKKPRS. Disordered stretches follow at residues 1–33 and 114–245; these read MAKS…ESLK and RGLR…AKAP. Lys-5 is subject to N6-methyllysine. Ser-31 is modified (phosphoserine). N6-acetyllysine is present on Lys-33. Residues 134–150 show a composition bias toward low complexity; sequence KGKVKAQIKAQAQAQIK. Positions 157–171 are enriched in basic and acidic residues; the sequence is AQAETKPKAQAETKP. Low complexity-rich tracts occupy residues 172-226 and 234-245; these read KAQA…ATPA and PPKGAQPPAKAP.

It belongs to the eukaryotic ribosomal protein eL29 family. In terms of assembly, component of the large ribosomal subunit.

It localises to the cytoplasm. In terms of biological role, component of the large ribosomal subunit. The ribosome is a large ribonucleoprotein complex responsible for the synthesis of proteins in the cell. The protein is Large ribosomal subunit protein eL29 (RPL29) of Oryctolagus cuniculus (Rabbit).